The primary structure comprises 308 residues: Low density lipoprotein receptor adapter protein 1 (308 aa).

Met-1 carries the post-translational modification N-acetylmethionine. Ser-14, Ser-186, and Ser-202 each carry phosphoserine. The PID domain occupies 42–196 (LLEGMLFSLK…QEGGDVLGAR (155 aa)). A Clathrin box motif is present at residues 212 to 216 (LLDLE). Residues 249–276 (WELDDGLDEAFSRLAQSRTNPQVLDTGL) are AP-2 complex binding. The [DE]-X(1,2)-F-X-X-[FL]-X-X-X-R motif signature appears at 257–266 (EAFSRLAQSR).

As to quaternary structure, interacts (via PID domain) with LDLR (via NPXY motif). Binds to soluble clathrin trimers. Interacts with AP2B1; the interaction mediates the association with the AP-2 complex. Interacts with VLDLR. Interacts with LRP2. As to expression, expressed at high levels in the kidney, liver, and placenta, with lower levels detectable in brain, heart, muscle, colon, spleen, intestine, lung, and leukocytes.

The protein localises to the cytoplasm. Adapter protein (clathrin-associated sorting protein (CLASP)) required for efficient endocytosis of the LDL receptor (LDLR) in polarized cells such as hepatocytes and lymphocytes, but not in non-polarized cells (fibroblasts). May be required for LDL binding and internalization but not for receptor clustering in coated pits. May facilitate the endocytosis of LDLR and LDLR-LDL complexes from coated pits by stabilizing the interaction between the receptor and the structural components of the pits. May also be involved in the internalization of other LDLR family members. Binds to phosphoinositides, which regulate clathrin bud assembly at the cell surface. Required for trafficking of LRP2 to the endocytic recycling compartment which is necessary for LRP2 proteolysis, releasing a tail fragment which translocates to the nucleus and mediates transcriptional repression. The polypeptide is Low density lipoprotein receptor adapter protein 1 (Homo sapiens (Human)).